The primary structure comprises 273 residues: Transmembrane protein 202 (273 aa).

The next 4 membrane-spanning stretches (helical) occupy residues 53–75 (HIYIRTLCGSLCSFSLLMLIAMS), 121–141 (FFLISVFTILTGLGWLFSSWI), 155–175 (VSMLSFISATCLLLCLNLFVA), and 189–209 (LLWTYYLNWCSDIFYMFAGII). The interval 242-273 (TTVSPAKDEGPRSEMESLSVREKNLPKSGLWW) is disordered. A compositionally biased stretch (basic and acidic residues) spans 247 to 266 (AKDEGPRSEMESLSVREKNL).

Its subcellular location is the membrane. This chain is Transmembrane protein 202 (TMEM202), found in Homo sapiens (Human).